We begin with the raw amino-acid sequence, 157 residues long: Protein GrpE (157 aa).

Residues 1–10 (MQEENQHPEQ) are compositionally biased toward basic and acidic residues. The segment at 1–21 (MQEENQHPEQDDISEAQDAGA) is disordered.

The protein belongs to the GrpE family. As to quaternary structure, homodimer.

Its subcellular location is the cytoplasm. Participates actively in the response to hyperosmotic and heat shock by preventing the aggregation of stress-denatured proteins, in association with DnaK and GrpE. It is the nucleotide exchange factor for DnaK and may function as a thermosensor. Unfolded proteins bind initially to DnaJ; upon interaction with the DnaJ-bound protein, DnaK hydrolyzes its bound ATP, resulting in the formation of a stable complex. GrpE releases ADP from DnaK; ATP binding to DnaK triggers the release of the substrate protein, thus completing the reaction cycle. Several rounds of ATP-dependent interactions between DnaJ, DnaK and GrpE are required for fully efficient folding. The protein is Protein GrpE of Methylovorus sp. (strain SS1 / DSM 11726).